Consider the following 467-residue polypeptide: tRNA-2-methylthio-N(6)-dimethylallyladenosine synthase (467 aa).

Residues 1–20 (MSDDTTQIEPAMAQETSPRA) are disordered. The region spanning 23–143 (RKVFVKTYGC…LPNALARVRG (121 aa)) is the MTTase N-terminal domain. Cys32, Cys68, Cys106, Cys184, Cys188, and Cys191 together coordinate [4Fe-4S] cluster. In terms of domain architecture, Radical SAM core spans 170 to 402 (RKRGVSAFLT…QALLSAQQYA (233 aa)). The TRAM domain occupies 405-467 (DSMIGRKMDV…TNSLIAQKLA (63 aa)).

Belongs to the methylthiotransferase family. MiaB subfamily. As to quaternary structure, monomer. Requires [4Fe-4S] cluster as cofactor.

The protein resides in the cytoplasm. The enzyme catalyses N(6)-dimethylallyladenosine(37) in tRNA + (sulfur carrier)-SH + AH2 + 2 S-adenosyl-L-methionine = 2-methylsulfanyl-N(6)-dimethylallyladenosine(37) in tRNA + (sulfur carrier)-H + 5'-deoxyadenosine + L-methionine + A + S-adenosyl-L-homocysteine + 2 H(+). Its function is as follows. Catalyzes the methylthiolation of N6-(dimethylallyl)adenosine (i(6)A), leading to the formation of 2-methylthio-N6-(dimethylallyl)adenosine (ms(2)i(6)A) at position 37 in tRNAs that read codons beginning with uridine. The protein is tRNA-2-methylthio-N(6)-dimethylallyladenosine synthase of Brucella melitensis biotype 1 (strain ATCC 23456 / CCUG 17765 / NCTC 10094 / 16M).